The primary structure comprises 252 residues: 3-deoxy-manno-octulosonate cytidylyltransferase 2 (252 aa).

This sequence belongs to the KdsB family.

It is found in the cytoplasm. It catalyses the reaction 3-deoxy-alpha-D-manno-oct-2-ulosonate + CTP = CMP-3-deoxy-beta-D-manno-octulosonate + diphosphate. It functions in the pathway nucleotide-sugar biosynthesis; CMP-3-deoxy-D-manno-octulosonate biosynthesis; CMP-3-deoxy-D-manno-octulosonate from 3-deoxy-D-manno-octulosonate and CTP: step 1/1. Its pathway is bacterial outer membrane biogenesis; lipopolysaccharide biosynthesis. Functionally, activates KDO (a required 8-carbon sugar) for incorporation into bacterial lipopolysaccharide in Gram-negative bacteria. In Actinobacillus pleuropneumoniae serotype 5b (strain L20), this protein is 3-deoxy-manno-octulosonate cytidylyltransferase 2.